A 375-amino-acid polypeptide reads, in one-letter code: Arsenite methyltransferase (375 aa).

The residue at position 335 (serine 335) is a Phosphoserine.

The protein belongs to the methyltransferase superfamily. Arsenite methyltransferase family.

The protein resides in the cytoplasm. Its subcellular location is the cytosol. The enzyme catalyses arsenic triglutathione + [thioredoxin]-dithiol + S-adenosyl-L-methionine + 2 H2O = methylarsonous acid + [thioredoxin]-disulfide + 3 glutathione + S-adenosyl-L-homocysteine + H(+). It catalyses the reaction arsenic triglutathione + 2 [thioredoxin]-dithiol + 2 S-adenosyl-L-methionine + H2O = dimethylarsinous acid + 2 [thioredoxin]-disulfide + 3 glutathione + 2 S-adenosyl-L-homocysteine + 2 H(+). The catalysed reaction is arsenic triglutathione + 3 [thioredoxin]-dithiol + 3 S-adenosyl-L-methionine = trimethylarsine + 3 [thioredoxin]-disulfide + 3 glutathione + 3 S-adenosyl-L-homocysteine + 3 H(+). In terms of biological role, catalyzes the transfer of a methyl group from AdoMet to trivalent arsenicals producing methylated and dimethylated arsenicals. It methylates arsenite to form methylarsonate, Me-AsO(3)H(2), which is reduced by methylarsonate reductase to methylarsonite, Me-As(OH)2. Methylarsonite is also a substrate and it is converted into the much less toxic compound dimethylarsinate (cacodylate), Me(2)As(O)-OH. In Homo sapiens (Human), this protein is Arsenite methyltransferase (AS3MT).